The following is a 98-amino-acid chain: HssA/B-like protein 50 (98 aa).

Disordered stretches follow at residues 1–26 and 68–98; these read MTLF…SFGS and TRGS…CCGI. Gly residues predominate over residues 84–98; sequence GHGGMGGGNGSCCGI.

It belongs to the hssA/B family.

The polypeptide is HssA/B-like protein 50 (hssl50) (Dictyostelium discoideum (Social amoeba)).